Consider the following 397-residue polypeptide: Succinyl-diaminopimelate desuccinylase (397 aa).

Histidine 73 is a binding site for Zn(2+). The active site involves aspartate 75. Aspartate 106 is a Zn(2+) binding site. Residue glutamate 140 is the Proton acceptor of the active site. Zn(2+) is bound by residues glutamate 141, glutamate 169, and histidine 366.

This sequence belongs to the peptidase M20A family. DapE subfamily. In terms of assembly, homodimer. The cofactor is Zn(2+). Requires Co(2+) as cofactor.

The catalysed reaction is N-succinyl-(2S,6S)-2,6-diaminopimelate + H2O = (2S,6S)-2,6-diaminopimelate + succinate. It participates in amino-acid biosynthesis; L-lysine biosynthesis via DAP pathway; LL-2,6-diaminopimelate from (S)-tetrahydrodipicolinate (succinylase route): step 3/3. In terms of biological role, catalyzes the hydrolysis of N-succinyl-L,L-diaminopimelic acid (SDAP), forming succinate and LL-2,6-diaminopimelate (DAP), an intermediate involved in the bacterial biosynthesis of lysine and meso-diaminopimelic acid, an essential component of bacterial cell walls. The protein is Succinyl-diaminopimelate desuccinylase of Rhizobium leguminosarum bv. trifolii (strain WSM2304).